Reading from the N-terminus, the 404-residue chain is Nicotinate phosphoribosyltransferase (404 aa).

Histidine 224 is subject to Phosphohistidine; by autocatalysis.

The protein belongs to the NAPRTase family. Post-translationally, transiently phosphorylated on a His residue during the reaction cycle. Phosphorylation strongly increases the affinity for substrates and increases the rate of nicotinate D-ribonucleotide production. Dephosphorylation regenerates the low-affinity form of the enzyme, leading to product release.

The catalysed reaction is nicotinate + 5-phospho-alpha-D-ribose 1-diphosphate + ATP + H2O = nicotinate beta-D-ribonucleotide + ADP + phosphate + diphosphate. It functions in the pathway cofactor biosynthesis; NAD(+) biosynthesis; nicotinate D-ribonucleotide from nicotinate: step 1/1. In terms of biological role, catalyzes the synthesis of beta-nicotinate D-ribonucleotide from nicotinate and 5-phospho-D-ribose 1-phosphate at the expense of ATP. The polypeptide is Nicotinate phosphoribosyltransferase (Proteus mirabilis (strain HI4320)).